The following is a 480-amino-acid chain: RuvB-like helicase 2 (480 aa).

Residue 73–80 participates in ATP binding; that stretch reads GEPSTGKT.

This sequence belongs to the RuvB family. In terms of assembly, forms homohexameric rings. May form a dodecamer with rept made of two stacked hexameric rings. Component of the chromatin remodeling Ino80 complex.

Its subcellular location is the nucleus. The catalysed reaction is ATP + H2O = ADP + phosphate + H(+). In terms of biological role, acts as a transcriptional coactivator in Wg signaling caused by altered arm signaling. Pont and rept interfere antagonistically with nuclear arm signaling function, and are required to enhance or reduce arm activity, respectively. Also an essential cofactor for the normal function of Myc; required for cellular proliferation and growth. Proposed core component of the chromatin remodeling Ino80 complex which is involved in transcriptional regulation, DNA replication and probably DNA repair. This is RuvB-like helicase 2 from Drosophila pseudoobscura pseudoobscura (Fruit fly).